The following is a 350-amino-acid chain: UDP-3-O-acylglucosamine N-acyltransferase (350 aa).

Catalysis depends on His244, which acts as the Proton acceptor.

Belongs to the transferase hexapeptide repeat family. LpxD subfamily. As to quaternary structure, homotrimer.

The enzyme catalyses a UDP-3-O-[(3R)-3-hydroxyacyl]-alpha-D-glucosamine + a (3R)-hydroxyacyl-[ACP] = a UDP-2-N,3-O-bis[(3R)-3-hydroxyacyl]-alpha-D-glucosamine + holo-[ACP] + H(+). The protein operates within bacterial outer membrane biogenesis; LPS lipid A biosynthesis. Its function is as follows. Catalyzes the N-acylation of UDP-3-O-acylglucosamine using 3-hydroxyacyl-ACP as the acyl donor. Is involved in the biosynthesis of lipid A, a phosphorylated glycolipid that anchors the lipopolysaccharide to the outer membrane of the cell. The protein is UDP-3-O-acylglucosamine N-acyltransferase of Herminiimonas arsenicoxydans.